A 793-amino-acid polypeptide reads, in one-letter code: ABC transporter G family member 1 (793 aa).

Residues 1–20 show a composition bias toward low complexity; it reads MDSNNNNNNENEAFSGASES. A disordered region spans residues 1 to 96; sequence MDSNNNNNNE…NNNQNNNIIN (96 aa). Basic and acidic residues predominate over residues 21–37; the sequence is SEFRKIVEENENEREFE. Polar residues predominate over residues 59-68; it reads ETINPNISLD. Positions 67 to 102 form a coiled coil; that stretch reads LDNNNNNNQNNQNNQNNNNNNNNQNNNIINNLNKKN. Residues 69–96 are compositionally biased toward low complexity; sequence NNNNNNQNNQNNQNNNNNNNNQNNNIIN. Residues 123 to 364 form the ABC transporter domain; it reads VQITEKGKKK…FNANGYHCSE (242 aa). 156 to 163 is a binding site for ATP; the sequence is GPSGAGKT. A compositionally biased stretch (acidic residues) spans 382–398; the sequence is DQADSDDDDYNDEEEEI. The tract at residues 382 to 457 is disordered; sequence DQADSDDDDY…QSTDGRARRR (76 aa). A compositionally biased stretch (gly residues) spans 399–413; that stretch reads GGGGGGSGGGAGGIE. Polar residues predominate over residues 421 to 437; the sequence is PTMNGSAVDNIKNNELK. Positions 438–448 are enriched in low complexity; the sequence is QQQQQQQQQQQ. Positions 527 to 785 constitute an ABC transmembrane type-2 domain; that stretch reads MAFKVNLIQA…VLTFLVLKLK (259 aa). Helical transmembrane passes span 533-553, 563-583, 610-630, 647-667, 674-694, 701-721, and 764-784; these read LIQA…LGLG, VVAF…IHVF, FMDA…VYWM, FVLM…LISS, VGTA…GFFI, GWLV…AAVI, and VWIL…VLKL.

It belongs to the ABC transporter superfamily. ABCG family.

Its subcellular location is the membrane. The polypeptide is ABC transporter G family member 1 (abcG1) (Dictyostelium discoideum (Social amoeba)).